We begin with the raw amino-acid sequence, 610 residues long: Transducer of Cdc42-dependent actin assembly protein 2 homolog (610 aa).

The F-BAR domain occupies 1–267 (MIPVSRFFTV…EVGKIDAEGD (267 aa)). The segment at 283–315 (APFEIEDLGDPKNCDSRTNDSADGSGGKLLKSS) is disordered. Basic and acidic residues predominate over residues 291-302 (GDPKNCDSRTND). An REM-1 domain is found at 352–429 (SKPAHVRLSC…IHNLKEFYAM (78 aa)). The stretch at 355-385 (AHVRLSCLRSKIRDMEKQLEQAIQGREGITR) forms a coiled coil. 2 disordered regions span residues 436 to 487 (EGQE…SSKN) and 499 to 519 (LISS…RRAE). Residues 437–449 (GQERSFGGRDTPD) are compositionally biased toward basic and acidic residues. Residues 453 to 464 (SMSGSSTNQSSS) show a composition bias toward low complexity. Residues 475–487 (AGNSSSADDSSKN) are compositionally biased toward polar residues. The segment covering 501–513 (SSPKTSKSSTPTP) has biased composition (low complexity). Positions 547-610 (ETAVTVTALF…VPTSYLQFPQ (64 aa)) constitute an SH3 domain.

It belongs to the FNBP1 family. Interacts (via SH3 domain) with wsp-1 and abi-1. Interacts with cdc-42 and (via SH3 domain) with wve-1.

It localises to the cell junction. It is found in the cell membrane. The protein resides in the cytoplasmic vesicle. The protein localises to the cytoplasm. Its subcellular location is the recycling endosome. Plays a role in protein trafficking, actin organization and embryonic morphogenesis. Potentially acts as a cdc-42 effector. May play a role in egg laying. Together with toca-1, is required for protein trafficking regulating yolk protein clathrin-mediated endocytosis by oocytes during oogenesis and retrograde recycling and the sorting of recycling endosome cargo proteins such as mig-14. Also, together with toca-2, controls the distribution of actin at cell junctions. The protein is Transducer of Cdc42-dependent actin assembly protein 2 homolog of Caenorhabditis elegans.